Here is a 263-residue protein sequence, read N- to C-terminus: uncharacterized protein (263 aa).

The DOD-type homing endonuclease domain maps to 107–246; the sequence is ILGVLNGDGS…CCSFLEKLGI (140 aa).

This is an uncharacterized protein from Methanocaldococcus jannaschii (strain ATCC 43067 / DSM 2661 / JAL-1 / JCM 10045 / NBRC 100440) (Methanococcus jannaschii).